A 392-amino-acid chain; its full sequence is G2/mitotic-specific cyclin-B (392 aa).

Belongs to the cyclin family. Cyclin AB subfamily.

Its function is as follows. Essential for the control of the cell cycle at the G2/M (mitosis) transition. Interacts with the CDC2 protein kinase to form MPF. G2/M cyclins accumulate steadily during G2 and are abruptly destroyed at mitosis. This chain is G2/mitotic-specific cyclin-B, found in Hydra viridissima (Green hydra).